The sequence spans 965 residues: SKI family transcriptional corepressor 1 (965 aa).

Disordered regions lie at residues 45–72 (TQLG…SSAL), 278–367 (RTFS…GGGA), 410–458 (DDPV…GGGA), 530–592 (SGAP…GSYV), 615–777 (AYGA…FAPE), and 796–843 (VCTP…EDGL). 3 stretches are compositionally biased toward gly residues: residues 283-312 (QGGG…GPGC), 356-367 (GPAGPGGPGGGA), and 418-442 (EPKG…GGPG). The segment covering 571 to 586 (LPPPLAPLPPPPPPPA) has biased composition (pro residues). The span at 620-632 (PARGPGPGAGSGG) shows a compositional bias: gly residues. Residues 641 to 650 (EGSSSYNSAS) show a composition bias toward polar residues. 2 stretches are compositionally biased toward acidic residues: residues 654–663 (DTADEPEVDV) and 670–679 (DDEDAQEETE). A compositionally biased stretch (basic and acidic residues) spans 800–823 (EAHEPDKEDNHSPADDLETRKSYP). Polar residues predominate over residues 824–835 (DQRSISQPSPAN). Positions 858–922 (ENLAREELQK…DTLCNELDQE (65 aa)) form a coiled coil.

The protein belongs to the SKI family. In terms of assembly, interacts with LBX1. Interacts with SMAD1, SMAD2 and SMAD3. As to expression, present specifically in cerebellar Purkinje cells (at protein level).

Its subcellular location is the nucleus. In terms of biological role, acts as a transcriptional corepressor of LBX1. Inhibits BMP signaling. The sequence is that of SKI family transcriptional corepressor 1 (SKOR1) from Homo sapiens (Human).